The sequence spans 282 residues: Putative 1-acyl-sn-glycerol-3-phosphate acyltransferase acl-2 (282 aa).

The next 2 membrane-spanning stretches (helical) occupy residues 4–24 (FWSI…NIST) and 32–52 (ISFY…TMIP). The HXXXXD motif motif lies at 98–103 (HQSSLD). The chain crosses the membrane as a helical span at residues 122 to 142 (ILAYVPFFNLGAYFSNTIFID).

The protein belongs to the 1-acyl-sn-glycerol-3-phosphate acyltransferase family.

It is found in the membrane. The catalysed reaction is a 1-acyl-sn-glycero-3-phosphate + an acyl-CoA = a 1,2-diacyl-sn-glycero-3-phosphate + CoA. The protein operates within phospholipid metabolism; CDP-diacylglycerol biosynthesis; CDP-diacylglycerol from sn-glycerol 3-phosphate: step 2/3. In terms of biological role, converts lysophosphatidic acid (LPA) into phosphatidic acid by incorporating an acyl moiety at the sn-2 position of the glycerol backbone. This Caenorhabditis elegans protein is Putative 1-acyl-sn-glycerol-3-phosphate acyltransferase acl-2 (acl-2).